We begin with the raw amino-acid sequence, 130 residues long: Putative pre-16S rRNA nuclease (130 aa).

It belongs to the YqgF nuclease family.

It is found in the cytoplasm. Could be a nuclease involved in processing of the 5'-end of pre-16S rRNA. In Sulfurimonas denitrificans (strain ATCC 33889 / DSM 1251) (Thiomicrospira denitrificans (strain ATCC 33889 / DSM 1251)), this protein is Putative pre-16S rRNA nuclease.